The primary structure comprises 428 residues: Histidine--tRNA ligase (428 aa).

The protein belongs to the class-II aminoacyl-tRNA synthetase family.

The protein resides in the cytoplasm. The enzyme catalyses tRNA(His) + L-histidine + ATP = L-histidyl-tRNA(His) + AMP + diphosphate + H(+). The polypeptide is Histidine--tRNA ligase (Korarchaeum cryptofilum (strain OPF8)).